The primary structure comprises 433 residues: Probable beta-1,3-galactosyl-O-glycosyl-glycoprotein beta-1,6-N-acetylglucosaminyltransferase 7 (433 aa).

Residues 1–8 (MSQLRTTK) are Cytoplasmic-facing. A helical; Signal-anchor for type II membrane protein transmembrane segment spans residues 9–25 (AGLVACGMICAFIFLYL). At 26 to 433 (RNPGPEEAEA…QSHFNSQPHH (408 aa)) the chain is on the extracellular side. Cystine bridges form between cysteine 57/cysteine 209, cysteine 143/cysteine 358, cysteine 164/cysteine 191, and cysteine 367/cysteine 398. An N-linked (GlcNAc...) asparagine glycan is attached at asparagine 112. The interval 233–275 (NITPGVTPPANSKPKTGQGPPKPSPDENSYTAPNTIFKQSPPH) is disordered. Positions 258–275 (DENSYTAPNTIFKQSPPH) are enriched in polar residues. Residues 413–433 (VPPEPHWQFPQQSHFNSQPHH) are disordered. Residues 421-433 (FPQQSHFNSQPHH) are compositionally biased toward polar residues.

The protein belongs to the glycosyltransferase 14 family.

The protein localises to the golgi apparatus membrane. The protein operates within protein modification; protein glycosylation. Its function is as follows. Probable glycosyltransferase. The sequence is that of Probable beta-1,3-galactosyl-O-glycosyl-glycoprotein beta-1,6-N-acetylglucosaminyltransferase 7 from Mus musculus (Mouse).